Reading from the N-terminus, the 615-residue chain is Aspartokinase (615 aa).

Disordered stretches follow at residues 84-105 and 127-171; these read ALQP…GTAT and SSVS…SISQ. 2 stretches are compositionally biased toward low complexity: residues 90–102 and 127–164; these read SSSG…SMSG and SSVS…ATPS. The ACT domain maps to 467-537; that stretch reads IHSNRKTLSH…EVTVSKDMAI (71 aa).

Belongs to the aspartokinase family.

The catalysed reaction is L-aspartate + ATP = 4-phospho-L-aspartate + ADP. It functions in the pathway amino-acid biosynthesis; L-methionine biosynthesis via de novo pathway; L-homoserine from L-aspartate: step 1/3. The protein operates within amino-acid biosynthesis; L-threonine biosynthesis; L-threonine from L-aspartate: step 1/5. Functionally, phosphorylates aspartate, the first step in the biosynthesis of amino acids that derive from aspartate (the aspartate family of amino acids), including methioinine and threonine, the latter of which is a precursor to isoleucine. This chain is Aspartokinase, found in Cryptococcus neoformans var. grubii serotype A (strain H99 / ATCC 208821 / CBS 10515 / FGSC 9487) (Filobasidiella neoformans var. grubii).